Here is a 640-residue protein sequence, read N- to C-terminus: Cytochrome P450 monooxygenase cyp1 (640 aa).

N-linked (GlcNAc...) asparagine glycosylation occurs at Asn71. The chain crosses the membrane as a helical span at residues 120–139 (LLVFLVGLFLGTIYLLYRYW). The N-linked (GlcNAc...) asparagine glycan is linked to Asn350. Cys572 contacts heme.

This sequence belongs to the cytochrome P450 family. Heme is required as a cofactor.

The protein resides in the membrane. Its pathway is secondary metabolite biosynthesis. Cytochrome P450 monooxygenase; part of the gene cluster that mediates the biosynthesis of the glycolipid biosurfactant ustilagic acid (UA). UA is a secreted cellobiose glycolipid that is toxic for many microorganisms and confers biocontrol activity to U.maydis. UA consists of 15,16-dihydroxypalmitic or 2,15,16-trihydroxypalmitic acid, which is O-glycosidically linked to cellobiose at its terminal hydroxyl group. In addition, the cellobiose moiety is acetylated and acylated with a short-chain hydroxy fatty acid. UA biosynthesis starts with omega-hydroxylation of palmitic acid catalyzed by the cytochrome P450 monooxygenase cyp1. Terminal hydroxylation of palmitic acid precedes subterminal hydroxylation catalyzed by the cytochrome P450 monooxygenase cyp2. Sequential glucosylation of the hydroxy fatty acid is probably catalyzed by the glycosyltransferase ugt1. The cellobiose lipid is further decorated by acetylation of the proximal glucose residue and by acylation with a short-chain beta-hydroxy fatty acid at the distal glucose residue. The acyltransferase uat1 may be a good candidate for catalyzing either acetylation or acylation of the cellobiose lipid. The fatty acid synthase fas2 may be involved in synthesis of the carbon backbone of the short-chain beta-hydroxy fatty acid esterified to the cellobiose disaccharide. The secreted UA consists of a mixture of both alpha-hydroxylated and non-hydroxylated glycolipids; therefore, alpha-hydroxylation of the long-chain fatty, catalyzed by the fatty acid hydroxylase ahd1, occurs late in UA biosynthesis and may be the last step before secretion. In Mycosarcoma maydis (Corn smut fungus), this protein is Cytochrome P450 monooxygenase cyp1.